Consider the following 718-residue polypeptide: Probable trehalose-phosphatase (718 aa).

The disordered stretch occupies residues 449-470; it reads LSMDQTGHKKVDAKKKPGIRKK. Residues 459 to 470 are compositionally biased toward basic residues; that stretch reads VDAKKKPGIRKK.

It in the N-terminal section; belongs to the glycosyltransferase 20 family. The protein in the C-terminal section; belongs to the trehalose phosphatase family.

It carries out the reaction alpha,alpha-trehalose 6-phosphate + H2O = alpha,alpha-trehalose + phosphate. This Encephalitozoon cuniculi (strain GB-M1) (Microsporidian parasite) protein is Probable trehalose-phosphatase.